The following is a 1177-amino-acid chain: DNA-directed RNA polymerase subunit beta' (1177 aa).

Zn(2+)-binding residues include C60, C62, C75, and C78. D450, D452, and D454 together coordinate Mg(2+). Residues C795, C869, C876, and C879 each contribute to the Zn(2+) site.

This sequence belongs to the RNA polymerase beta' chain family. As to quaternary structure, the RNAP catalytic core consists of 2 alpha, 1 beta, 1 beta' and 1 omega subunit. When a sigma factor is associated with the core the holoenzyme is formed, which can initiate transcription. The cofactor is Mg(2+). Requires Zn(2+) as cofactor.

It carries out the reaction RNA(n) + a ribonucleoside 5'-triphosphate = RNA(n+1) + diphosphate. Functionally, DNA-dependent RNA polymerase catalyzes the transcription of DNA into RNA using the four ribonucleoside triphosphates as substrates. The chain is DNA-directed RNA polymerase subunit beta' from Clostridium botulinum (strain Eklund 17B / Type B).